A 151-amino-acid chain; its full sequence is Mediator of RNA polymerase II transcription subunit 32 (151 aa).

The tract at residues 128–151 (GVAPGSVHSSSTGFDSRFSEDSTQ) is disordered.

The protein belongs to the mediator complex subunit 32 family. In terms of assembly, oligomers. Component of the Mediator complex. Interacts with MED6. Interacts with GEBPL.

The protein localises to the nucleus. Its function is as follows. Component of the Mediator complex, a coactivator involved in the regulated transcription of nearly all RNA polymerase II-dependent genes. Mediator functions as a bridge to convey information from gene-specific regulatory proteins to the basal RNA polymerase II transcription machinery. The Mediator complex, having a compact conformation in its free form, is recruited to promoters by direct interactions with regulatory proteins and serves for the assembly of a functional pre-initiation complex with RNA polymerase II and the general transcription factors. In Arabidopsis thaliana (Mouse-ear cress), this protein is Mediator of RNA polymerase II transcription subunit 32 (MED32).